The chain runs to 364 residues: Probable methyltransferase ICS2 (364 aa).

Residues tyrosine 18, cysteine 61, aspartate 98, leucine 99, serine 133, and phenylalanine 134 each contribute to the S-adenosyl-L-homocysteine site. Asparagine 172, aspartate 258, phenylalanine 260, and asparagine 261 together coordinate Mg(2+).

The protein belongs to the methyltransferase superfamily. Type-7 methyltransferase family. Mg(2+) serves as cofactor.

Its function is as follows. No detectable N-methyltransferase activity. The polypeptide is Probable methyltransferase ICS2 (Camellia irrawadiensis (Burmese tea)).